The following is a 198-amino-acid chain: N-acetyltransferase 9-like protein (198 aa).

In terms of domain architecture, N-acetyltransferase spans 34 to 178 (EEIRRLTGSE…KEITMELPGE (145 aa)).

The protein belongs to the acetyltransferase family. GNAT subfamily.

In Caenorhabditis briggsae, this protein is N-acetyltransferase 9-like protein.